The following is a 778-amino-acid chain: Lon protease (778 aa).

A Lon N-terminal domain is found at 8–202 (LPLIPLRGLI…NVLTVIKDEL (195 aa)). 354-361 (GPPGVGKT) serves as a coordination point for ATP. The Lon proteolytic domain maps to 591–772 (EDKIGVVTGM…DTVLENALIG (182 aa)). Catalysis depends on residues S678 and K721.

Belongs to the peptidase S16 family. As to quaternary structure, homohexamer. Organized in a ring with a central cavity.

It is found in the cytoplasm. The enzyme catalyses Hydrolysis of proteins in presence of ATP.. Functionally, ATP-dependent serine protease that mediates the selective degradation of mutant and abnormal proteins as well as certain short-lived regulatory proteins. Required for cellular homeostasis and for survival from DNA damage and developmental changes induced by stress. Degrades polypeptides processively to yield small peptide fragments that are 5 to 10 amino acids long. Binds to DNA in a double-stranded, site-specific manner. The sequence is that of Lon protease from Clostridium acetobutylicum (strain ATCC 824 / DSM 792 / JCM 1419 / IAM 19013 / LMG 5710 / NBRC 13948 / NRRL B-527 / VKM B-1787 / 2291 / W).